The chain runs to 249 residues: tRNA pseudouridine synthase A (249 aa).

Residue D52 is the Nucleophile of the active site. Position 111 (Y111) interacts with substrate.

It belongs to the tRNA pseudouridine synthase TruA family. Homodimer.

It catalyses the reaction uridine(38/39/40) in tRNA = pseudouridine(38/39/40) in tRNA. Formation of pseudouridine at positions 38, 39 and 40 in the anticodon stem and loop of transfer RNAs. The sequence is that of tRNA pseudouridine synthase A from Caulobacter sp. (strain K31).